We begin with the raw amino-acid sequence, 141 residues long: MAKKVVAIIKLALPAGKANPAPPVGPALGQHGVNIMAFCKDYNAKTADQAGMIIPVEISVFEDRSFTFVLKTPPASVLIRKAAGVERGSNEPNKKFVATITRDQLREIAQTKMPDLNANDIEAAMNIVAGTARNMGVKISD.

This sequence belongs to the universal ribosomal protein uL11 family. As to quaternary structure, part of the ribosomal stalk of the 50S ribosomal subunit. Interacts with L10 and the large rRNA to form the base of the stalk. L10 forms an elongated spine to which L12 dimers bind in a sequential fashion forming a multimeric L10(L12)X complex. In terms of processing, one or more lysine residues are methylated.

In terms of biological role, forms part of the ribosomal stalk which helps the ribosome interact with GTP-bound translation factors. This is Large ribosomal subunit protein uL11 from Microcystis aeruginosa (strain NIES-843 / IAM M-2473).